The following is a 55-amino-acid chain: Accessory gland-specific peptide 70A (55 aa).

A signal peptide spans 1-19 (MKTLALFLVLVCVLGLVQS). The essential for binding to sperm stretch occupies residues 20-33 (WEWPWNRKPTKFPI). Hydroxyproline occurs at positions 28 and 32. Isoleucine 33 bears the Isoleucine derivative mark. 3 positions are modified to hydroxyproline: proline 34, proline 36, and proline 38. Residues 36–55 (PNPRDKWCRLNLGPAWGGRC) are sufficient to induce PMR. A disulfide bridge connects residues cysteine 43 and cysteine 55.

The protein belongs to the Drosophila sex peptide family. In terms of processing, sperm-bound protein is cleaved to release an active C-terminal peptide. Gradual release from stored sperm may function to prolong PMR and enhance male reproductive success. Main cells of the accessory glands of males (paragonial gland).

The protein localises to the secreted. In terms of biological role, male seminal protein which triggers short- and long-term post-mating behavioral responses (PMR) in female Drosophila. Binds initially to sperm where it is later cleaved to release an active peptide within the female reproductive tract. Signals via the sex peptide receptor (SPR) in female flies; may also act via other receptors. Moderates the activity of distinct neuronal circuitries in the female genital tract to promote specific PMRs including: enhanced ovulation, increased egg laying rate, increased feeding/foraging rate, induced antimicrobial peptide synthesis, reduced mating receptivity, reduced day-time sleep and reduced lifespan in multiple mated females. The sequence is that of Accessory gland-specific peptide 70A (SP) from Drosophila melanogaster (Fruit fly).